The sequence spans 308 residues: Elongation factor Ts (308 aa).

The tract at residues 80–83 is involved in Mg(2+) ion dislocation from EF-Tu; it reads TDFV.

It belongs to the EF-Ts family.

It is found in the cytoplasm. Functionally, associates with the EF-Tu.GDP complex and induces the exchange of GDP to GTP. It remains bound to the aminoacyl-tRNA.EF-Tu.GTP complex up to the GTP hydrolysis stage on the ribosome. This chain is Elongation factor Ts, found in Rhizobium rhizogenes (strain K84 / ATCC BAA-868) (Agrobacterium radiobacter).